The primary structure comprises 227 residues: NADH-quinone oxidoreductase subunit C (227 aa).

This sequence belongs to the complex I 30 kDa subunit family. As to quaternary structure, NDH-1 is composed of 14 different subunits. Subunits NuoB, C, D, E, F, and G constitute the peripheral sector of the complex.

The protein resides in the cell inner membrane. The catalysed reaction is a quinone + NADH + 5 H(+)(in) = a quinol + NAD(+) + 4 H(+)(out). Functionally, NDH-1 shuttles electrons from NADH, via FMN and iron-sulfur (Fe-S) centers, to quinones in the respiratory chain. The immediate electron acceptor for the enzyme in this species is believed to be ubiquinone. Couples the redox reaction to proton translocation (for every two electrons transferred, four hydrogen ions are translocated across the cytoplasmic membrane), and thus conserves the redox energy in a proton gradient. In Legionella pneumophila (strain Paris), this protein is NADH-quinone oxidoreductase subunit C.